We begin with the raw amino-acid sequence, 228 residues long: Glucose-induced degradation protein 8-A homolog (228 aa).

Positions 25-57 constitute a LisH domain; sequence QRADMNRLIMNYLVTEGFKEAAEKFRMESGIEP. The 58-residue stretch at 63 to 120 folds into the CTLH domain; it reads SLDERIKIREMVLKGQIQEAIALINSLHPELLDTNRYLYFHLQQQHLIELIRLRETEA.

It belongs to the GID8 family. Identified in the CTLH complex that contains at least MAEA, RMND5A (or alternatively its paralog RMND5B), GID8, WDR26, and RANBP9 and/or RANBP10. Interacts with CTNNB1.

In terms of biological role, core component of the CTLH E3 ubiquitin-protein ligase complex that selectively accepts ubiquitin from UBE2H and mediates ubiquitination and subsequent proteasomal degradation of target proteins. Acts as a positive regulator of Wnt signaling pathway by promoting beta-catenin (CTNNB1) nuclear accumulation. Required for normal Wnt signaling and normal dorsoventral patterning during embryogenesis. This chain is Glucose-induced degradation protein 8-A homolog (gid8a), found in Danio rerio (Zebrafish).